A 622-amino-acid chain; its full sequence is Cytochrome c oxidase subunit 1 (622 aa).

At Met1–Ile27 the chain is on the extracellular side. Residues Ala28–Ala46 traverse the membrane as a helical segment. Topologically, residues Met47–Glu68 are cytoplasmic. A helical transmembrane segment spans residues Val69 to Ala88. A Fe(II)-heme a-binding site is contributed by His73. At Leu89 to Ala110 the chain is on the extracellular side. Residues Leu111–Phe128 traverse the membrane as a helical segment. Topologically, residues Leu129–Leu159 are cytoplasmic. The chain crosses the membrane as a helical span at residues Gln160–Ile178. The Extracellular segment spans residues Asn179–Thr196. A helical transmembrane segment spans residues Thr197–Leu215. At Ala216–Glu241 the chain is on the cytoplasmic side. The helical transmembrane segment at His242–Gly261 threads the bilayer. Residues His249 and Tyr253 each coordinate Cu cation. A cross-link (1'-histidyl-3'-tyrosine (His-Tyr)) is located at residues His249 to Tyr253. The Extracellular portion of the chain corresponds to Ile262–Ala284. The helical transmembrane segment at Ile285–Gly304 threads the bilayer. Residues His298 and His299 each contribute to the Cu cation site. Over Leu305–Ile312 the chain is Cytoplasmic. Residues Phe313–Trp331 form a helical membrane-spanning segment. Residues Leu332 to Met346 are Extracellular-facing. The chain crosses the membrane as a helical span at residues Leu347–Leu366. Residues Ala367–Gln374 lie on the Cytoplasmic side of the membrane. A helical membrane pass occupies residues Phe375–Val394. His384 is a heme a3 binding site. His386 contributes to the Fe(II)-heme a binding site. Residues Phe395–Ser421 are Extracellular-facing. A helical membrane pass occupies residues Phe422–Leu441. At Met442–Thr459 the chain is on the cytoplasmic side. The chain crosses the membrane as a helical span at residues Gly460 to Leu479. Over Val480 to Asn552 the chain is Extracellular. The chain crosses the membrane as a helical span at residues Gly553–Leu572. The Cytoplasmic portion of the chain corresponds to Tyr573 to Gly580. Residues Leu581–His604 traverse the membrane as a helical segment. Topologically, residues Gly605–Ala622 are cytoplasmic.

Belongs to the heme-copper respiratory oxidase family. Requires Cu(2+) as cofactor. It depends on heme as a cofactor.

It localises to the cell membrane. It carries out the reaction 4 Fe(II)-[cytochrome c] + O2 + 8 H(+)(in) = 4 Fe(III)-[cytochrome c] + 2 H2O + 4 H(+)(out). The protein operates within energy metabolism; oxidative phosphorylation. Functionally, cytochrome c oxidase is the component of the respiratory chain that catalyzes the reduction of oxygen to water. Subunits 1-3 form the functional core of the enzyme complex. Co I is the catalytic subunit of the enzyme. Electrons originating in cytochrome c are transferred via the copper A center of subunit 2 and heme a of subunit 1 to the bimetallic center formed by heme a3 and copper B. This cytochrome c oxidase shows proton pump activity across the membrane in addition to the electron transfer. The protein is Cytochrome c oxidase subunit 1 (ctaD) of Bacillus subtilis (strain 168).